Reading from the N-terminus, the 331-residue chain is Protein mono-ADP-ribosyltransferase PARP11 (331 aa).

K11 carries the post-translational modification N6-(ADP-ribosyl)lysine. Residues 15 to 99 (SDVDDMDTSD…VTGKQRLIKR (85 aa)) enclose the WWE domain. ADP-ribosylcysteine occurs at positions 49 and 65. D80 carries the ADP-ribosyl aspartic acid modification. In terms of domain architecture, PARP catalytic spans 116 to 331 (IPMPTHWENV…IYPEYLIDFH (216 aa)).

The protein belongs to the ARTD/PARP family. Post-translationally, auto-mono-ADP-ribosylated. Predominantly expressed in testis, preferentially in postmeiotic germ cells. Also detectable in other tissues, including liver, lung, spleen, thymus and brain.

Its subcellular location is the nucleus. The protein resides in the nuclear pore complex. The catalysed reaction is L-aspartyl-[protein] + NAD(+) = 4-O-(ADP-D-ribosyl)-L-aspartyl-[protein] + nicotinamide. It catalyses the reaction L-cysteinyl-[protein] + NAD(+) = S-(ADP-D-ribosyl)-L-cysteinyl-[protein] + nicotinamide + H(+). The enzyme catalyses L-glutamyl-[protein] + NAD(+) = 5-O-(ADP-D-ribosyl)-L-glutamyl-[protein] + nicotinamide. It carries out the reaction L-lysyl-[protein] + NAD(+) = N(6)-(ADP-D-ribosyl)-L-lysyl-[protein] + nicotinamide + H(+). Its function is as follows. Mono-ADP-ribosyltransferase that mediates mono-ADP-ribosylation of target proteins. Plays a role in nuclear envelope stability and nuclear remodeling during spermiogenesis. Inhibits the type I interferon activated signaling pathway. Mechanistically, mono-ADP-ribosylates beta-TrCP/BTRC to promote IFNAR1 ubiquitination and protect BTRC from ubiquitin-proteasome degradation. This chain is Protein mono-ADP-ribosyltransferase PARP11, found in Mus musculus (Mouse).